The primary structure comprises 311 residues: Probable flavin reductase (311 aa).

FMN is bound by residues 38-41, 55-61, 88-89, and R95; these read TANS, CLAKSSR, and FA.

The protein belongs to the non-flavoprotein flavin reductase family.

This Rhizobium meliloti (strain 1021) (Ensifer meliloti) protein is Probable flavin reductase.